We begin with the raw amino-acid sequence, 440 residues long: Xylose isomerase (440 aa).

Catalysis depends on residues His-100 and Asp-103. Mg(2+) contacts are provided by Glu-231, Glu-267, His-270, Asp-295, Asp-306, Asp-308, and Asp-338.

It belongs to the xylose isomerase family. As to quaternary structure, homotetramer. Mg(2+) serves as cofactor.

The protein localises to the cytoplasm. It carries out the reaction alpha-D-xylose = alpha-D-xylulofuranose. In Burkholderia cenocepacia (strain HI2424), this protein is Xylose isomerase.